The sequence spans 220 residues: Flavin-dependent thymidylate synthase (220 aa).

Residues 1–208 (MKIDILDKGF…PWTFEAFLKY (208 aa)) enclose the ThyX domain. Residues threonine 55, 78–80 (RHR), and glutamate 86 contribute to the FAD site. DUMP contacts are provided by residues 75 to 78 (QWFR), 86 to 90 (ELSGR), and arginine 147. The ThyX motif signature appears at 78-88 (RHRIASYNELS). FAD-binding positions include 163–165 (NAR) and asparagine 169. Arginine 174 is a binding site for dUMP. The Involved in ionization of N3 of dUMP, leading to its activation role is filled by arginine 174.

Belongs to the thymidylate synthase ThyX family. In terms of assembly, homotetramer. FAD serves as cofactor.

It catalyses the reaction dUMP + (6R)-5,10-methylene-5,6,7,8-tetrahydrofolate + NADPH + H(+) = dTMP + (6S)-5,6,7,8-tetrahydrofolate + NADP(+). It functions in the pathway pyrimidine metabolism; dTTP biosynthesis. In terms of biological role, catalyzes the reductive methylation of 2'-deoxyuridine-5'-monophosphate (dUMP) to 2'-deoxythymidine-5'-monophosphate (dTMP) while utilizing 5,10-methylenetetrahydrofolate (mTHF) as the methyl donor, and NADPH and FADH(2) as the reductant. The polypeptide is Flavin-dependent thymidylate synthase (Thermotoga petrophila (strain ATCC BAA-488 / DSM 13995 / JCM 10881 / RKU-1)).